The chain runs to 137 residues: Probable leaf thionin (137 aa).

A signal peptide spans 1-28 (MATNKSIKSVVICVLILGLVLEQVQVEG). Disulfide bonds link Cys31-Cys68, Cys32-Cys60, Cys40-Cys58, and Cys44-Cys54. Residues 75-137 (LNLLPESGEP…DGDVIQSVEA (63 aa)) constitute a propeptide, acidic domain.

The protein belongs to the plant thionin (TC 1.C.44) family. 4 C-C subfamily.

Its subcellular location is the secreted. Functionally, thionins are small plant proteins which are toxic to animal cells. They seem to exert their toxic effect at the level of the cell membrane. Their precise function is not known. The polypeptide is Probable leaf thionin (Hordeum vulgare (Barley)).